Reading from the N-terminus, the 90-residue chain is Small ribosomal subunit protein bS18 (90 aa).

This sequence belongs to the bacterial ribosomal protein bS18 family. Part of the 30S ribosomal subunit. Forms a tight heterodimer with protein bS6.

Functionally, binds as a heterodimer with protein bS6 to the central domain of the 16S rRNA, where it helps stabilize the platform of the 30S subunit. The sequence is that of Small ribosomal subunit protein bS18 from Bacteroides fragilis (strain YCH46).